We begin with the raw amino-acid sequence, 520 residues long: MAFLRAIGAEARYLTQRAYSSAAPTTKLFIDGKFVESKTKEWIDVHDPATNKVVTRVPKATQDEMQTALESNKKAFRSWSNQSILTRQAVMFKLQALIKENMGELAKNITKEQGKTLADAEGDVLRGLQVVEHCCSIPSLQMGETVANVARDMDTYSLVMPLGVTAGIAPFNFPAMIPLWMFPVAITTGNTMLLKPSERVPGATMLLMELLNEAGCPPGVVNVIHGQHDAVNFICDAPAIKAVSFVGSDQAGKYIYERAGKNGKRVQSNMGAKNHGVILSDANKENTLNQLAGAAFGAAGQRCMALSTAVFVGDAQGWIPDLVERAQKLKVNAGHVPGTDVGPVISAASRQRINDLIESGVKEGAKLILDGRKISVPGFEDGYFVGPTILSDVTPSMKCYTEEIFGPVLVILKADNLDDAIDIVNANPYGNGTAVFTTNGAAARKFVNEIDAGQVGVNVPIPVPLPMFSFTGTRGSFRGDHHFYGKQGIKFYTQTKTVTQLWRETDVNHTQAAVAMPTMK.

Positions 169, 171, 195, 198, 199, and 248 each coordinate NAD(+). Cys303 (nucleophile) is an active-site residue. Glu403 is a binding site for NAD(+).

This sequence belongs to the aldehyde dehydrogenase family. As to quaternary structure, homotetramer.

It is found in the mitochondrion. The enzyme catalyses 2-methyl-3-oxopropanoate + NAD(+) + CoA + H2O = propanoyl-CoA + hydrogencarbonate + NADH + H(+). It carries out the reaction 3-oxopropanoate + NAD(+) + CoA + H2O = hydrogencarbonate + acetyl-CoA + NADH + H(+). In terms of biological role, probable malonate and methylmalonate semialdehyde dehydrogenase involved in the catabolism of valine, thymine, and compounds catabolized by way of beta-alanine, including uracil and cytidine. The chain is Probable methylmalonate-semialdehyde/malonate-semialdehyde dehydrogenase [acylating], mitochondrial from Drosophila pseudoobscura pseudoobscura (Fruit fly).